A 245-amino-acid polypeptide reads, in one-letter code: 1-(5-phosphoribosyl)-5-[(5-phosphoribosylamino)methylideneamino] imidazole-4-carboxamide isomerase (245 aa).

Asp-7 functions as the Proton acceptor in the catalytic mechanism. Asp-129 acts as the Proton donor in catalysis.

It belongs to the HisA/HisF family.

Its subcellular location is the cytoplasm. The enzyme catalyses 1-(5-phospho-beta-D-ribosyl)-5-[(5-phospho-beta-D-ribosylamino)methylideneamino]imidazole-4-carboxamide = 5-[(5-phospho-1-deoxy-D-ribulos-1-ylimino)methylamino]-1-(5-phospho-beta-D-ribosyl)imidazole-4-carboxamide. The protein operates within amino-acid biosynthesis; L-histidine biosynthesis; L-histidine from 5-phospho-alpha-D-ribose 1-diphosphate: step 4/9. The chain is 1-(5-phosphoribosyl)-5-[(5-phosphoribosylamino)methylideneamino] imidazole-4-carboxamide isomerase from Shewanella sp. (strain ANA-3).